Consider the following 242-residue polypeptide: Phosducin-like protein 2 (242 aa).

Residues 34-201 enclose the Phosducin domain; the sequence is VLRLQKEAMV…LEWKLAEVGA (168 aa). The segment at 89-242 is thioredoxin fold; the sequence is FGELREISGN…SSNSDSEDTK (154 aa).

It belongs to the phosducin family. In terms of assembly, interacts with the CCT chaperonin complex and actin.

It localises to the endoplasmic reticulum. Its function is as follows. Essential for male fertility, spermiogenesis and acrosome formation. The protein is Phosducin-like protein 2 (PDCL2) of Bos taurus (Bovine).